The sequence spans 539 residues: Phosphoenolpyruvate carboxykinase (ATP) (539 aa).

Substrate contacts are provided by R64, Y206, and K212. ATP is bound by residues K212, H231, and 247–255 (GLSGTGKTT). Mn(2+) is bound by residues K212 and H231. A Mn(2+)-binding site is contributed by D268. Residues E296, R332, 448 to 449 (RI), and T454 each bind ATP. A substrate-binding site is contributed by R332.

It belongs to the phosphoenolpyruvate carboxykinase (ATP) family. In terms of assembly, monomer. The cofactor is Mn(2+).

Its subcellular location is the cytoplasm. The catalysed reaction is oxaloacetate + ATP = phosphoenolpyruvate + ADP + CO2. It functions in the pathway carbohydrate biosynthesis; gluconeogenesis. In terms of biological role, involved in the gluconeogenesis. Catalyzes the conversion of oxaloacetate (OAA) to phosphoenolpyruvate (PEP) through direct phosphoryl transfer between the nucleoside triphosphate and OAA. The polypeptide is Phosphoenolpyruvate carboxykinase (ATP) (Salmonella arizonae (strain ATCC BAA-731 / CDC346-86 / RSK2980)).